Here is a 94-residue protein sequence, read N- to C-terminus: Pyrimidine/purine nucleoside phosphorylase (94 aa).

It belongs to the nucleoside phosphorylase PpnP family.

It carries out the reaction a purine D-ribonucleoside + phosphate = a purine nucleobase + alpha-D-ribose 1-phosphate. It catalyses the reaction adenosine + phosphate = alpha-D-ribose 1-phosphate + adenine. The catalysed reaction is cytidine + phosphate = cytosine + alpha-D-ribose 1-phosphate. The enzyme catalyses guanosine + phosphate = alpha-D-ribose 1-phosphate + guanine. It carries out the reaction inosine + phosphate = alpha-D-ribose 1-phosphate + hypoxanthine. It catalyses the reaction thymidine + phosphate = 2-deoxy-alpha-D-ribose 1-phosphate + thymine. The catalysed reaction is uridine + phosphate = alpha-D-ribose 1-phosphate + uracil. The enzyme catalyses xanthosine + phosphate = alpha-D-ribose 1-phosphate + xanthine. Catalyzes the phosphorolysis of diverse nucleosides, yielding D-ribose 1-phosphate and the respective free bases. Can use uridine, adenosine, guanosine, cytidine, thymidine, inosine and xanthosine as substrates. Also catalyzes the reverse reactions. The protein is Pyrimidine/purine nucleoside phosphorylase of Pseudomonas entomophila (strain L48).